The chain runs to 381 residues: Gustatory and pheromone receptor 39a, isoform D (381 aa).

At 1–43 (MKRNAFEELRVQLRTLKWLGVLRFTIDFNKCLVRENASEERSA) the chain is on the cytoplasmic side. A helical transmembrane segment spans residues 44 to 64 (WLYLIGVVGITCSLIVYSTYF). The Extracellular segment spans residues 65–78 (PSHFIMGKHNTTGN). N-linked (GlcNAc...) asparagine glycosylation occurs at Asn74. A helical transmembrane segment spans residues 79 to 101 (CYALINIRSCSIVTMLIYTQLYI). Over 102 to 128 (QRFRFVALLQSILRFNQISGSHREEGR) the chain is Cytoplasmic. Residues 129-149 (FAFYYYTHLSLLIICMLNYAY) traverse the membrane as a helical segment. Residues 150 to 172 (GYWTAGVRLTTIPIYLLQYGFSY) are Extracellular-facing. A helical transmembrane segment spans residues 173–193 (LFLGQVVVLFACIQQILLSIL). The Cytoplasmic segment spans residues 194–234 (KYYNQVVLKNIKSSKESREFYYNFCKYNQVIWLSYTEINHC). The helical transmembrane segment at 235 to 255 (FGLLLLLVTGLILLITPSGPF) threads the bilayer. At 256–273 (YLVSTIFEGRFRQNWQFS) the chain is on the extracellular side. A helical membrane pass occupies residues 274 to 294 (LMSFTAILWSLPWIVLLVLAM). Residues 295–350 (GRNDVQKEANKTAKMLTKVPRTGTGLDRMIEKFLLKNLRQKPILTAYGFFALDKST) lie on the Cytoplasmic side of the membrane. The chain crosses the membrane as a helical span at residues 351 to 371 (LFKLFTAIFTYMVILVQFKEM). The Extracellular portion of the chain corresponds to 372-381 (ENSTKSINKF). N-linked (GlcNAc...) asparagine glycosylation occurs at Asn373.

The protein belongs to the insect chemoreceptor superfamily. Gustatory receptor (GR) family. Gr21a subfamily. Expressed in the adult labellar chemosensory neurons and adult thorax and abdomen.

It localises to the cell membrane. Gustatory receptor which mediates acceptance or avoidance behavior, depending on its substrates. Plays a role in sustaining courtship behavior in males, possibly through the reception of a stimulating arrestant pheromone. In Drosophila melanogaster (Fruit fly), this protein is Gustatory and pheromone receptor 39a, isoform D (Gr39a).